A 371-amino-acid chain; its full sequence is 43 kDa relaxation protein (371 aa).

Disordered stretches follow at residues 1–46 (MASY…GNMP), 150–172 (KEPDAVAQKRHVSGKHRPNAKNT), 196–221 (RVDSRSLKAQGIDREPERHLGAGQVQ), 263–291 (SERDTLTLKQELKSEPEQESHSGRTFDFE), and 328–371 (IHQE…SFSR). The span at 22-42 (YIAREGKYAREKDSDLEHKES) shows a compositional bias: basic and acidic residues. The segment covering 157–168 (QKRHVSGKHRPN) has biased composition (basic residues). Positions 196–215 (RVDSRSLKAQGIDREPERHL) are enriched in basic and acidic residues. A compositionally biased stretch (basic and acidic residues) spans 330–365 (QEMERQRERERLAEKQRQQEKERQRLAEQIRQKPDK).

Belongs to the MobA/MobL family.

This protein is probably required for relaxation complex formation. This Salmonella typhimurium protein is 43 kDa relaxation protein.